The following is a 1824-amino-acid chain: Treslin (1824 aa).

Disordered stretches follow at residues glutamate 542–lysine 572, alanine 590–leucine 622, serine 907–serine 973, arginine 1001–phenylalanine 1035, alanine 1098–asparagine 1117, valine 1189–glutamate 1221, proline 1293–lysine 1388, phenylalanine 1459–proline 1518, threonine 1617–serine 1650, and proline 1803–aspartate 1824. Over residues serine 546–leucine 555 the composition is skewed to low complexity. Polar residues predominate over residues threonine 562 to lysine 572. Residues glycine 605–lysine 619 are compositionally biased toward basic and acidic residues. Residues serine 907–serine 921 are compositionally biased toward polar residues. A compositionally biased stretch (basic and acidic residues) spans serine 932–leucine 952. 2 stretches are compositionally biased toward polar residues: residues valine 1005–serine 1014 and threonine 1103–valine 1114. Polar residues predominate over residues arginine 1319–proline 1345. The span at lysine 1347 to glycine 1370 shows a compositional bias: low complexity. Over residues lysine 1462 to threonine 1472 the composition is skewed to polar residues. Residues threonine 1480–alanine 1490 show a composition bias toward basic and acidic residues. Composition is skewed to polar residues over residues threonine 1617–leucine 1629 and serine 1636–serine 1650. The segment covering proline 1807–aspartate 1824 has biased composition (basic residues).

Belongs to the treslin family. In terms of assembly, interacts with topbp1 (via BRCT domains); interaction takes place in a cdk2-dependent manner. Component of the replisome complex.

The protein resides in the nucleus. Regulator of DNA replication and S/M and G2/M checkpoints. Regulates the triggering of DNA replication initiation via its interaction with topbp1 by participating in cdk2-mediated loading of cdc45l onto replication origins. Required for the transition from pre-replication complex (pre-RC) to pre-initiation complex (pre-IC). Required to prevent mitotic entry after treatment with ionizing radiation. This chain is Treslin (ticrr), found in Danio rerio (Zebrafish).